Consider the following 477-residue polypeptide: tRNA-2-methylthio-N(6)-dimethylallyladenosine synthase (477 aa).

One can recognise an MTTase N-terminal domain in the interval 3-120 (KKLHIKTWGC…LPTMIKQVQE (118 aa)). [4Fe-4S] cluster contacts are provided by cysteine 12, cysteine 49, cysteine 83, cysteine 157, cysteine 161, and cysteine 164. One can recognise a Radical SAM core domain in the interval 143 to 375 (RAEGATAFVS…QHVINNQSMQ (233 aa)). In terms of domain architecture, TRAM spans 378–441 (RAMLGSTQRI…PNSLRGKFLR (64 aa)).

The protein belongs to the methylthiotransferase family. MiaB subfamily. Monomer. The cofactor is [4Fe-4S] cluster.

Its subcellular location is the cytoplasm. The catalysed reaction is N(6)-dimethylallyladenosine(37) in tRNA + (sulfur carrier)-SH + AH2 + 2 S-adenosyl-L-methionine = 2-methylsulfanyl-N(6)-dimethylallyladenosine(37) in tRNA + (sulfur carrier)-H + 5'-deoxyadenosine + L-methionine + A + S-adenosyl-L-homocysteine + 2 H(+). Functionally, catalyzes the methylthiolation of N6-(dimethylallyl)adenosine (i(6)A), leading to the formation of 2-methylthio-N6-(dimethylallyl)adenosine (ms(2)i(6)A) at position 37 in tRNAs that read codons beginning with uridine. The polypeptide is tRNA-2-methylthio-N(6)-dimethylallyladenosine synthase (Aeromonas hydrophila subsp. hydrophila (strain ATCC 7966 / DSM 30187 / BCRC 13018 / CCUG 14551 / JCM 1027 / KCTC 2358 / NCIMB 9240 / NCTC 8049)).